The primary structure comprises 398 residues: Succinate--CoA ligase [ADP-forming] subunit beta (398 aa).

An ATP-grasp domain is found at 9–237; that stretch reads RDLFETHGVP…AGGLDILELK (229 aa). ATP-binding positions include lysine 45, 52 to 54, alanine 94, and glutamate 99; that span reads GRG. 2 residues coordinate Mg(2+): asparagine 191 and aspartate 205. Residues asparagine 257 and 319-321 contribute to the substrate site; that span reads GIT.

Belongs to the succinate/malate CoA ligase beta subunit family. As to quaternary structure, heterotetramer of two alpha and two beta subunits. The cofactor is Mg(2+).

It carries out the reaction succinate + ATP + CoA = succinyl-CoA + ADP + phosphate. It catalyses the reaction GTP + succinate + CoA = succinyl-CoA + GDP + phosphate. It functions in the pathway carbohydrate metabolism; tricarboxylic acid cycle; succinate from succinyl-CoA (ligase route): step 1/1. Its function is as follows. Succinyl-CoA synthetase functions in the citric acid cycle (TCA), coupling the hydrolysis of succinyl-CoA to the synthesis of either ATP or GTP and thus represents the only step of substrate-level phosphorylation in the TCA. The beta subunit provides nucleotide specificity of the enzyme and binds the substrate succinate, while the binding sites for coenzyme A and phosphate are found in the alpha subunit. The polypeptide is Succinate--CoA ligase [ADP-forming] subunit beta (Corynebacterium glutamicum (strain ATCC 13032 / DSM 20300 / JCM 1318 / BCRC 11384 / CCUG 27702 / LMG 3730 / NBRC 12168 / NCIMB 10025 / NRRL B-2784 / 534)).